A 918-amino-acid polypeptide reads, in one-letter code: Nitrate reductase [NADH] (918 aa).

The tract at residues 25 to 44 is disordered; it reads KNGPNHRADSPVRGCNFPNS. Cysteine 195 is a Mo-molybdopterin binding site. In terms of domain architecture, Cytochrome b5 heme-binding spans 543–618; sequence SNTYTLSEVK…LEDYRIGELI (76 aa). Residues histidine 578 and histidine 601 each contribute to the heme site. An FAD-binding FR-type domain is found at 661 to 774; sequence NEKIPCKLIS…KGPLGHIEYT (114 aa). FAD is bound by residues 714–717, 731–735, phenylalanine 736, phenylalanine 743, 748–750, and threonine 801; these read RAYT, VVKVY, and IMS.

The protein belongs to the nitrate reductase family. In terms of assembly, homodimer. FAD serves as cofactor. It depends on heme as a cofactor. The cofactor is Mo-molybdopterin.

The catalysed reaction is nitrite + NAD(+) + H2O = nitrate + NADH + H(+). Functionally, nitrate reductase is a key enzyme involved in the first step of nitrate assimilation in plants, fungi and bacteria. In Cucurbita maxima (Pumpkin), this protein is Nitrate reductase [NADH].